The following is a 607-amino-acid chain: Methylmalonate-semialdehyde dehydrogenase [acylating], mitochondrial (607 aa).

Positions 1 to 69 are disordered; sequence MVRVKQKNLE…KLRSSSSTTT (69 aa). Residues 1–98 constitute a mitochondrion transit peptide; sequence MVRVKQKNLE…QFLALRSSWL (98 aa). Positions 9 to 30 are enriched in polar residues; that stretch reads LESYRSNGTYPPTWRNPTTSFA. A compositionally biased stretch (basic residues) spans 42 to 51; sequence LKSKTKRRRL. Phe259, Lys283, Glu286, Lys287, and Ser336 together coordinate NAD(+). Cys391 functions as the Nucleophile in the catalytic mechanism. Glu491 is an NAD(+) binding site.

This sequence belongs to the aldehyde dehydrogenase family.

The protein localises to the mitochondrion. It carries out the reaction 2-methyl-3-oxopropanoate + NAD(+) + CoA + H2O = propanoyl-CoA + hydrogencarbonate + NADH + H(+). The chain is Methylmalonate-semialdehyde dehydrogenase [acylating], mitochondrial (ALDH6B2) from Arabidopsis thaliana (Mouse-ear cress).